Reading from the N-terminus, the 842-residue chain is Protein P (842 aa).

The segment at 1-177 (MPLSYQHFRR…FCGSPYSWEQ (177 aa)) is terminal protein domain (TP). Residues 178 to 345 (ELHHGAFLDG…YCLSHLVNLL (168 aa)) are spacer. The disordered stretch occupies residues 186–273 (DGPSRMGEES…AKNIASRSAS (88 aa)). Residues 223-239 (GPQSQQRPLDRSQQGRS) show a composition bias toward polar residues. The tract at residues 346–689 (EDWGPCTEHG…YLNLYPVARQ (344 aa)) is polymerase/reverse transcriptase domain (RT). In terms of domain architecture, Reverse transcriptase spans 356-599 (RHHIRIPRTP…YSLNFMGYVI (244 aa)). Asp428, Asp550, and Asp551 together coordinate Mg(2+).

This sequence belongs to the hepadnaviridae P protein family.

It carries out the reaction DNA(n) + a 2'-deoxyribonucleoside 5'-triphosphate = DNA(n+1) + diphosphate. It catalyses the reaction Endonucleolytic cleavage to 5'-phosphomonoester.. Its activity is regulated as follows. Activated by host HSP70 and HSP40 in vitro to be able to bind the epsilon loop of the pgRNA. Because deletion of the RNase H region renders the protein partly chaperone-independent, the chaperones may be needed indirectly to relieve occlusion of the RNA-binding site by this domain. Inhibited by several reverse-transcriptase inhibitors: Lamivudine, Adefovir and Entecavir. Its function is as follows. Multifunctional enzyme that converts the viral RNA genome into dsDNA in viral cytoplasmic capsids. This enzyme displays a DNA polymerase activity that can copy either DNA or RNA templates, and a ribonuclease H (RNase H) activity that cleaves the RNA strand of RNA-DNA heteroduplexes in a partially processive 3'- to 5'-endonucleasic mode. Neo-synthesized pregenomic RNA (pgRNA) are encapsidated together with the P protein, and reverse-transcribed inside the nucleocapsid. Initiation of reverse-transcription occurs first by binding the epsilon loop on the pgRNA genome, and is initiated by protein priming, thereby the 5'-end of (-)DNA is covalently linked to P protein. Partial (+)DNA is synthesized from the (-)DNA template and generates the relaxed circular DNA (RC-DNA) genome. After budding and infection, the RC-DNA migrates in the nucleus, and is converted into a plasmid-like covalently closed circular DNA (cccDNA). The activity of P protein does not seem to be necessary for cccDNA generation, and is presumably released from (+)DNA by host nuclear DNA repair machinery. The chain is Protein P from Homo sapiens (Human).